The primary structure comprises 402 residues: Type II NADH:quinone oxidoreductase (402 aa).

Residues 12 to 16, 39 to 40, and Val83 each bind FAD; these read GAGYA and NK. Residue Glu172 is part of the active site. FAD-binding positions include Asp302, 319–320, and Lys379; that span reads AQ.

Belongs to the NADH dehydrogenase family. FAD serves as cofactor.

The protein resides in the cell membrane. It catalyses the reaction a quinone + NADH + H(+) = a quinol + NAD(+). Alternative, nonproton pumping NADH:quinone oxidoreductase that delivers electrons to the respiratory chain by oxidation of NADH and reduction of quinones, and contributes to the regeneration of NAD(+). This Staphylococcus epidermidis (strain ATCC 35984 / DSM 28319 / BCRC 17069 / CCUG 31568 / BM 3577 / RP62A) protein is Type II NADH:quinone oxidoreductase.